A 343-amino-acid chain; its full sequence is Aspartate beta-hydroxylase domain-containing protein 2 (343 aa).

Residues 1-31 (MWLEWLVAWSWSLDGLRDCIATGIQSVRDCD) are Cytoplasmic-facing. Residues 32–52 (GTAVITVACLLVLFVWYCYHV) traverse the membrane as a helical segment. Residues 53-343 (GREQPRPHVS…ALDFIFAPGR (291 aa)) lie on the Lumenal side of the membrane. N-linked (GlcNAc...) asparagine glycosylation is found at Asn-77 and Asn-185. Trp-202 and Ser-246 together coordinate 2-oxoglutarate. Fe cation is bound at residue His-257. 2-oxoglutarate is bound at residue 266 to 268 (RCH). His-302 provides a ligand contact to Fe cation. Arg-315 serves as a coordination point for 2-oxoglutarate.

The protein belongs to the aspartyl/asparaginyl beta-hydroxylase family. It depends on Fe cation as a cofactor.

The protein resides in the membrane. Functionally, may function as 2-oxoglutarate-dependent dioxygenase. This chain is Aspartate beta-hydroxylase domain-containing protein 2 (Asphd2), found in Rattus norvegicus (Rat).